Consider the following 39-residue polypeptide: Protein disulfide-isomerase A3 (39 aa).

This sequence belongs to the protein disulfide isomerase family. Part of the major histocompatibility complex class I (MHC I) peptide loading complex composed of TAP1, TAP2, B2M, MHC heavy chain, TAPBP, PDIA3, and CALR. Interacts with ERP27 and CANX. Interacts with SERPINA2 and with SERPINA1. Interacts with ATP2A2. In terms of processing, within the major histocompatibility complex class I (MHC I) peptide loading complex forms reversible disulfide-linked heterodimers with TAPBP as part of its protein folding chaperone activity. This is essential to assist the dynamic assembly of the MHC I complex with high affinity antigens in the endoplasmic reticulum. Post-translationally, phosphorylated. In terms of tissue distribution, predominantly expressed in liver. Low in brain, testis and colon. Not detectable in pancreas and skeletal muscle.

It localises to the endoplasmic reticulum. It is found in the endoplasmic reticulum lumen. The protein localises to the melanosome. The catalysed reaction is Catalyzes the rearrangement of -S-S- bonds in proteins.. Functionally, protein disulfide isomerase that catalyzes the formation, isomerization, and reduction or oxidation of disulfide bonds in client proteins and functions as a protein folding chaperone. Core component of the major histocompatibility complex class I (MHC I) peptide loading complex where it functions as an essential folding chaperone for TAPBP. Through TAPBP, assists the dynamic assembly of the MHC I complex with high affinity antigens in the endoplasmic reticulum. Therefore, plays a crucial role in the presentation of antigens to cytotoxic T cells in adaptive immunity. The polypeptide is Protein disulfide-isomerase A3 (PDIA3) (Papio hamadryas (Hamadryas baboon)).